We begin with the raw amino-acid sequence, 779 residues long: Mesenchyme-specific cell surface glycoprotein (779 aa).

A signal peptide spans 1-15 (MQFGVPLLVLCLALG). Residues Asn-203 and Asn-234 are each glycosylated (N-linked (GlcNAc...) asparagine). The disordered stretch occupies residues 249 to 363 (AGFPRGTTWS…QYPMIPTTPL (115 aa)). The segment covering 262-351 (GAGGQGGQGQ…GGQGGQGGGN (90 aa)) has biased composition (gly residues). Asn-369, Asn-451, and Asn-609 each carry an N-linked (GlcNAc...) asparagine glycan.

Restricted to the primary mesenchyme cell lineage.

It is found in the cell membrane. In terms of biological role, not known. Could be involved in mesenchyme cell migration, adhesion, fusion, or spicule formation. The protein is Mesenchyme-specific cell surface glycoprotein of Strongylocentrotus purpuratus (Purple sea urchin).